The primary structure comprises 286 residues: tRNA (guanine-N(7)-)-methyltransferase (286 aa).

A phosphoserine mark is found at Ser-7 and Ser-59. S-adenosyl-L-methionine-binding positions include Gly-103, 126–127, 161–162, and Cys-181; these read EI and NA. Asp-184 is an active-site residue. 259-261 contacts S-adenosyl-L-methionine; it reads TEE.

It belongs to the class I-like SAM-binding methyltransferase superfamily. TrmB family. Forms a complex with TRM82.

It is found in the nucleus. The catalysed reaction is guanosine(46) in tRNA + S-adenosyl-L-methionine = N(7)-methylguanosine(46) in tRNA + S-adenosyl-L-homocysteine. Its pathway is tRNA modification; N(7)-methylguanine-tRNA biosynthesis. Functionally, methyltransferase that catalyzes the formation of N(7)-methylguanine at position 46 (m7G46) in tRNA, a modification required to maintain stability of tRNAs; its absence resulting in tRNA decay. Both the D-stem and T-stem structures of tRNAs are required for efficient methyltransferase activity. The chain is tRNA (guanine-N(7)-)-methyltransferase from Saccharomyces cerevisiae (strain RM11-1a) (Baker's yeast).